Reading from the N-terminus, the 201-residue chain is 3-isopropylmalate dehydratase small subunit (201 aa).

It belongs to the LeuD family. LeuD type 1 subfamily. As to quaternary structure, heterodimer of LeuC and LeuD.

It catalyses the reaction (2R,3S)-3-isopropylmalate = (2S)-2-isopropylmalate. Its pathway is amino-acid biosynthesis; L-leucine biosynthesis; L-leucine from 3-methyl-2-oxobutanoate: step 2/4. In terms of biological role, catalyzes the isomerization between 2-isopropylmalate and 3-isopropylmalate, via the formation of 2-isopropylmaleate. This Escherichia coli O127:H6 (strain E2348/69 / EPEC) protein is 3-isopropylmalate dehydratase small subunit.